The following is a 102-amino-acid chain: Small ribosomal subunit protein uS10 (102 aa).

Belongs to the universal ribosomal protein uS10 family. As to quaternary structure, part of the 30S ribosomal subunit.

Its function is as follows. Involved in the binding of tRNA to the ribosomes. In Bacillus subtilis (strain 168), this protein is Small ribosomal subunit protein uS10 (rpsJ).